The sequence spans 276 residues: tRNA dimethylallyltransferase (276 aa).

The interval 9 to 12 (DSLS) is interaction with substrate tRNA.

The protein belongs to the IPP transferase family. As to quaternary structure, monomer. It depends on Mg(2+) as a cofactor.

It catalyses the reaction adenosine(37) in tRNA + dimethylallyl diphosphate = N(6)-dimethylallyladenosine(37) in tRNA + diphosphate. Catalyzes the transfer of a dimethylallyl group onto the adenine at position 37 in tRNAs that read codons beginning with uridine, leading to the formation of N6-(dimethylallyl)adenosine (i(6)A). This chain is tRNA dimethylallyltransferase (miaA), found in Helicobacter pylori (strain Shi470).